The primary structure comprises 434 residues: Glutamyl-tRNA reductase (434 aa).

Residues 49–52, S114, 119–121, and Q125 contribute to the substrate site; these read TCNR and EPQ. C50 (nucleophile) is an active-site residue. 199-204 serves as a coordination point for NADP(+); sequence GAGETI.

This sequence belongs to the glutamyl-tRNA reductase family. In terms of assembly, homodimer.

It carries out the reaction (S)-4-amino-5-oxopentanoate + tRNA(Glu) + NADP(+) = L-glutamyl-tRNA(Glu) + NADPH + H(+). The protein operates within porphyrin-containing compound metabolism; protoporphyrin-IX biosynthesis; 5-aminolevulinate from L-glutamyl-tRNA(Glu): step 1/2. Catalyzes the NADPH-dependent reduction of glutamyl-tRNA(Glu) to glutamate 1-semialdehyde (GSA). The chain is Glutamyl-tRNA reductase from Pasteurella multocida (strain Pm70).